Consider the following 185-residue polypeptide: Ribosome-recycling factor (185 aa).

The protein belongs to the RRF family.

It localises to the cytoplasm. Its function is as follows. Responsible for the release of ribosomes from messenger RNA at the termination of protein biosynthesis. May increase the efficiency of translation by recycling ribosomes from one round of translation to another. In Streptococcus sanguinis (strain SK36), this protein is Ribosome-recycling factor.